The chain runs to 420 residues: UPF0053 protein HI_0107 (420 aa).

Residues 2 to 190 (DSIPLSTLFI…GEATPNEQHP (189 aa)) form the CNNM transmembrane domain. Helical transmembrane passes span 3–23 (SIPLSTLFIILIICLVLSAYF), 65–85 (FILIFNNLVNISASAIATVIG), 92–112 (AGVAIATGLLTFVMLVFSEIF), and 126–146 (FFSSHILTSLLKIFYPLVWLM). CBS domains lie at 208 to 268 (MVPR…KNEF) and 273 to 333 (LIRA…FTTS).

It belongs to the UPF0053 family.

It localises to the cell membrane. In Haemophilus influenzae (strain ATCC 51907 / DSM 11121 / KW20 / Rd), this protein is UPF0053 protein HI_0107.